A 235-amino-acid polypeptide reads, in one-letter code: Myc target protein 1 (235 aa).

The Bipartite nuclear localization signal signature appears at Arg-95–Arg-113. 4 positions are modified to phosphoserine: Ser-135, Ser-138, Ser-141, and Ser-149.

It belongs to the MYCT1 family. Down-regulated in gastric cancer tissues.

The protein resides in the nucleus. Its function is as follows. May regulate certain MYC target genes, MYC seems to be a direct upstream transcriptional activator. Does not seem to significantly affect growth cell capacity. Overexpression seems to mediate many of the known phenotypic features associated with MYC, including promotion of apoptosis, alteration of morphology, enhancement of anchorage-independent growth, tumorigenic conversion, promotion of genomic instability, and inhibition of hematopoietic differentiation. This Homo sapiens (Human) protein is Myc target protein 1 (MYCT1).